A 201-amino-acid polypeptide reads, in one-letter code: MYDGPLQELIDALSRLPGIGPKGAQRIAFHILDAPAEEANELADALREVKEKAKFCKICFNVSSDEVCQYCRDPRRDQSMICVVEESKDVIAVERTRQFRGLYHVLGGAISPLDGKGPADLHIRELCQRLADETVTEVILATNPNLEGEATATYLSRLIAPMGVTVSRLASGLPVGGDLEYADEVTLGRAFEGRLHVGVGA.

Residues 56-71 (CKICFNVSSDEVCQYC) form a C4-type zinc finger. Residues 79–174 (SMICVVEESK…TVSRLASGLP (96 aa)) form the Toprim domain.

This sequence belongs to the RecR family.

In terms of biological role, may play a role in DNA repair. It seems to be involved in an RecBC-independent recombinational process of DNA repair. It may act with RecF and RecO. The sequence is that of Recombination protein RecR from Cutibacterium acnes (strain DSM 16379 / KPA171202) (Propionibacterium acnes).